Reading from the N-terminus, the 440-residue chain is 23S rRNA (uracil(1939)-C(5))-methyltransferase RlmD (440 aa).

The 59-residue stretch at 10–68 folds into the TRAM domain; it reads KSTQPQRIEFTVDSLDHHCVGIGRHQGKAIFIEGALPGELVKARILEDKKQYAHAALQQ. Residues Cys-81, Cys-87, Cys-90, and Cys-169 each coordinate [4Fe-4S] cluster. Residues Gln-273, Phe-302, Asn-307, Glu-323, Asp-350, and Asp-371 each coordinate S-adenosyl-L-methionine. The active-site Nucleophile is Cys-397.

Belongs to the class I-like SAM-binding methyltransferase superfamily. RNA M5U methyltransferase family. RlmD subfamily.

The catalysed reaction is uridine(1939) in 23S rRNA + S-adenosyl-L-methionine = 5-methyluridine(1939) in 23S rRNA + S-adenosyl-L-homocysteine + H(+). In terms of biological role, catalyzes the formation of 5-methyl-uridine at position 1939 (m5U1939) in 23S rRNA. The sequence is that of 23S rRNA (uracil(1939)-C(5))-methyltransferase RlmD from Aeromonas hydrophila subsp. hydrophila (strain ATCC 7966 / DSM 30187 / BCRC 13018 / CCUG 14551 / JCM 1027 / KCTC 2358 / NCIMB 9240 / NCTC 8049).